A 99-amino-acid polypeptide reads, in one-letter code: MPTFSREEIVHLGDLARIALTDEEITRLQGELNVIADSINKVQEVASDDVPPTANPVPLEAYLRPDVAETPLTQEEALAGGPKTEAGMFVAPRILGSEE.

This sequence belongs to the GatC family. In terms of assembly, heterotrimer of A, B and C subunits.

The enzyme catalyses L-glutamyl-tRNA(Gln) + L-glutamine + ATP + H2O = L-glutaminyl-tRNA(Gln) + L-glutamate + ADP + phosphate + H(+). The catalysed reaction is L-aspartyl-tRNA(Asn) + L-glutamine + ATP + H2O = L-asparaginyl-tRNA(Asn) + L-glutamate + ADP + phosphate + 2 H(+). Allows the formation of correctly charged Asn-tRNA(Asn) or Gln-tRNA(Gln) through the transamidation of misacylated Asp-tRNA(Asn) or Glu-tRNA(Gln) in organisms which lack either or both of asparaginyl-tRNA or glutaminyl-tRNA synthetases. The reaction takes place in the presence of glutamine and ATP through an activated phospho-Asp-tRNA(Asn) or phospho-Glu-tRNA(Gln). The sequence is that of Aspartyl/glutamyl-tRNA(Asn/Gln) amidotransferase subunit C from Bifidobacterium longum (strain NCC 2705).